The primary structure comprises 249 residues: Serine acetyltransferase (249 aa).

Belongs to the transferase hexapeptide repeat family.

It localises to the cytoplasm. It catalyses the reaction L-serine + acetyl-CoA = O-acetyl-L-serine + CoA. Its pathway is amino-acid biosynthesis; L-cysteine biosynthesis; L-cysteine from L-serine: step 1/2. The polypeptide is Serine acetyltransferase (cysE) (Synechocystis sp. (strain ATCC 27184 / PCC 6803 / Kazusa)).